The primary structure comprises 190 residues: MIGTLSGTVEEVVCSNRIILCVGGVGYLVQLPGRVLSGCQHGDHVRLYIETYVGRDGVSQLYGFANREEQNCMRMLIKVSGVNYKTAMAILDVLTPEQVFSAIVSEDRAALKVGGVGEKLISRIISELTPQVQKFELNRFAATTRTDSEAVAALLSLGYERTAALGALQKVGVCDSTEDAVRRALLELSK.

The domain I stretch occupies residues 1 to 65; that stretch reads MIGTLSGTVE…DGVSQLYGFA (65 aa). Positions 66-137 are domain II; the sequence is NREEQNCMRM…LTPQVQKFEL (72 aa). The tract at residues 137 to 141 is flexible linker; the sequence is LNRFA. The interval 142-190 is domain III; the sequence is ATTRTDSEAVAALLSLGYERTAALGALQKVGVCDSTEDAVRRALLELSK.

The protein belongs to the RuvA family. In terms of assembly, homotetramer. Forms an RuvA(8)-RuvB(12)-Holliday junction (HJ) complex. HJ DNA is sandwiched between 2 RuvA tetramers; dsDNA enters through RuvA and exits via RuvB. An RuvB hexamer assembles on each DNA strand where it exits the tetramer. Each RuvB hexamer is contacted by two RuvA subunits (via domain III) on 2 adjacent RuvB subunits; this complex drives branch migration. In the full resolvosome a probable DNA-RuvA(4)-RuvB(12)-RuvC(2) complex forms which resolves the HJ.

The protein resides in the cytoplasm. Its function is as follows. The RuvA-RuvB-RuvC complex processes Holliday junction (HJ) DNA during genetic recombination and DNA repair, while the RuvA-RuvB complex plays an important role in the rescue of blocked DNA replication forks via replication fork reversal (RFR). RuvA specifically binds to HJ cruciform DNA, conferring on it an open structure. The RuvB hexamer acts as an ATP-dependent pump, pulling dsDNA into and through the RuvAB complex. HJ branch migration allows RuvC to scan DNA until it finds its consensus sequence, where it cleaves and resolves the cruciform DNA. The protein is Holliday junction branch migration complex subunit RuvA of Anaplasma marginale (strain Florida).